A 354-amino-acid polypeptide reads, in one-letter code: Protein RecA (354 aa).

Position 67–74 (67–74 (GPESSGKT)) interacts with ATP.

It belongs to the RecA family.

It is found in the cytoplasm. Functionally, can catalyze the hydrolysis of ATP in the presence of single-stranded DNA, the ATP-dependent uptake of single-stranded DNA by duplex DNA, and the ATP-dependent hybridization of homologous single-stranded DNAs. It interacts with LexA causing its activation and leading to its autocatalytic cleavage. This chain is Protein RecA, found in Chlamydia muridarum (strain MoPn / Nigg).